The following is a 135-amino-acid chain: RuBisCO chaperone RbcX (135 aa).

Positions 103–135 (QHLERMTQVSLSHPSPESEQQQFSDPDWDNLAS) are disordered. The span at 109-126 (TQVSLSHPSPESEQQQFS) shows a compositional bias: polar residues.

Belongs to the RbcX family. In terms of assembly, homodimer. Interacts with the exposed C-terminal peptide of RbcL ('Glu-459-Asp-468'); binds 1 RbcL peptide per homodimer. Contacts a second RbcL monomer via its peripheral polar surface. A slightly longer RbcL peptide binds to RbcX2 with a higher affinity.

It localises to the carboxysome. The protein resides in the cytoplasm. In terms of biological role, an RbcL-specific chaperone. The central cleft of the RbcX homodimer (RbcX2) binds the C-terminus of an RbcL monomer, stabilizing the C-terminus and probably preventing its reassociation with chaperonin GroEL-ES. At the same time the peripheral region of RbcX2 binds a second RbcL monomer, bridging the RbcL homodimers in the correct orientation. The RbcX2(2)-bound RbcL dimers then assemble into the RbcL8 core (RbcL8-(RbcX2)8). RbcS binding triggers the release of RbcX2. Required for optimal reconstitution of RuBisCO upon expression of rbcL-rbcS subunits in E.coli. This chain is RuBisCO chaperone RbcX, found in Anabaena sp. (strain CA / ATCC 33047).